The primary structure comprises 445 residues: Phosphoglucosamine mutase (445 aa).

Serine 104 acts as the Phosphoserine intermediate in catalysis. Mg(2+)-binding residues include serine 104, aspartate 243, aspartate 245, and aspartate 247. The residue at position 104 (serine 104) is a Phosphoserine.

Belongs to the phosphohexose mutase family. Mg(2+) is required as a cofactor. In terms of processing, activated by phosphorylation.

It catalyses the reaction alpha-D-glucosamine 1-phosphate = D-glucosamine 6-phosphate. Its function is as follows. Catalyzes the conversion of glucosamine-6-phosphate to glucosamine-1-phosphate. This Neisseria subflava protein is Phosphoglucosamine mutase.